The primary structure comprises 273 residues: 4-hydroxy-tetrahydrodipicolinate reductase (273 aa).

NAD(+)-binding positions include 8-13, Asp-35, 103-105, and 129-132; these read GALGRM, GTT, and SQNY. His-161 serves as the catalytic Proton donor/acceptor. His-162 is a (S)-2,3,4,5-tetrahydrodipicolinate binding site. Residue Lys-165 is the Proton donor of the active site. 171 to 172 is a (S)-2,3,4,5-tetrahydrodipicolinate binding site; it reads GT.

Belongs to the DapB family.

It is found in the cytoplasm. It carries out the reaction (S)-2,3,4,5-tetrahydrodipicolinate + NAD(+) + H2O = (2S,4S)-4-hydroxy-2,3,4,5-tetrahydrodipicolinate + NADH + H(+). The enzyme catalyses (S)-2,3,4,5-tetrahydrodipicolinate + NADP(+) + H2O = (2S,4S)-4-hydroxy-2,3,4,5-tetrahydrodipicolinate + NADPH + H(+). The protein operates within amino-acid biosynthesis; L-lysine biosynthesis via DAP pathway; (S)-tetrahydrodipicolinate from L-aspartate: step 4/4. In terms of biological role, catalyzes the conversion of 4-hydroxy-tetrahydrodipicolinate (HTPA) to tetrahydrodipicolinate. This is 4-hydroxy-tetrahydrodipicolinate reductase from Methanococcus aeolicus (strain ATCC BAA-1280 / DSM 17508 / OCM 812 / Nankai-3).